We begin with the raw amino-acid sequence, 471 residues long: Glutamate--tRNA ligase 1 (471 aa).

The 'HIGH' region signature appears at 15–25 (PSPTGYLHIGG). A 'KMSKS' region motif is present at residues 243 to 247 (KLSKR). Lysine 246 contacts ATP.

It belongs to the class-I aminoacyl-tRNA synthetase family. Glutamate--tRNA ligase type 1 subfamily. Monomer.

Its subcellular location is the cytoplasm. It catalyses the reaction tRNA(Glu) + L-glutamate + ATP = L-glutamyl-tRNA(Glu) + AMP + diphosphate. Catalyzes the attachment of glutamate to tRNA(Glu) in a two-step reaction: glutamate is first activated by ATP to form Glu-AMP and then transferred to the acceptor end of tRNA(Glu). In Cereibacter sphaeroides (strain ATCC 17029 / ATH 2.4.9) (Rhodobacter sphaeroides), this protein is Glutamate--tRNA ligase 1.